We begin with the raw amino-acid sequence, 182 residues long: Peptidyl-tRNA hydrolase (182 aa).

Tyrosine 14 is a tRNA binding site. Residue histidine 19 is the Proton acceptor of the active site. Positions 64, 66, and 112 each coordinate tRNA.

The protein belongs to the PTH family. As to quaternary structure, monomer.

Its subcellular location is the cytoplasm. The enzyme catalyses an N-acyl-L-alpha-aminoacyl-tRNA + H2O = an N-acyl-L-amino acid + a tRNA + H(+). In terms of biological role, hydrolyzes ribosome-free peptidyl-tRNAs (with 1 or more amino acids incorporated), which drop off the ribosome during protein synthesis, or as a result of ribosome stalling. Its function is as follows. Catalyzes the release of premature peptidyl moieties from peptidyl-tRNA molecules trapped in stalled 50S ribosomal subunits, and thus maintains levels of free tRNAs and 50S ribosomes. The protein is Peptidyl-tRNA hydrolase of Wolbachia sp. subsp. Drosophila simulans (strain wRi).